Consider the following 70-residue polypeptide: UPF0352 protein PBPRA2586 (70 aa).

It belongs to the UPF0352 family.

This chain is UPF0352 protein PBPRA2586, found in Photobacterium profundum (strain SS9).